Consider the following 255-residue polypeptide: Spectinomycin 9-adenylyltransferase (255 aa).

The enzyme catalyses spectinomycin + ATP = 9-O-adenylylspectinomycin + diphosphate. Functionally, mediates bacterial resistance to the antibiotic spectinomycin but not streptomycin. The chain is Spectinomycin 9-adenylyltransferase from Enterococcus faecalis (Streptococcus faecalis).